Here is a 410-residue protein sequence, read N- to C-terminus: Kelch domain-containing protein 10 (410 aa).

Positions 1 to 40 (MSAAQGWDRNRRRGGGAAGGASGVSGAGAAGGGRGTGQLN) are disordered. Residue R13 is modified to Omega-N-methylarginine. A compositionally biased stretch (gly residues) spans 15 to 36 (GGAAGGASGVSGAGAAGGGRGT). 6 Kelch repeats span residues 87–154 (GPDN…DVHV), 155–198 (CNVK…GYIY), 199–260 (STDL…IHAY), 261–319 (NLET…LQTF), 320–364 (QWVK…GSLF), and 365–403 (KIWL…GLTQ). Residues 369-410 (VVPSLLELAWEKLLAAFPNLANLSRTQLLHLGLTQELIERLK) are interaction with CUL2.

It belongs to the KLHDC10 family. Component of a CRL2 E3 ubiquitin-protein ligase complex, also named ECS (Elongin BC-CUL2/5-SOCS-box protein) complex, composed of CUL2, Elongin BC (ELOB and ELOC), RBX1 and substrate-specific adapter KLHDC10. Interacts (via the 6 Kelch repeats) with PPP5C.

It localises to the nucleus. The protein resides in the cytoplasm. It functions in the pathway protein modification; protein ubiquitination. Its function is as follows. Substrate-recognition component of a Cul2-RING (CRL2) E3 ubiquitin-protein ligase complex of the DesCEND (destruction via C-end degrons) pathway, which recognizes a C-degron located at the extreme C-terminus of target proteins, leading to their ubiquitination and degradation. The C-degron recognized by the DesCEND pathway is usually a motif of less than ten residues and can be present in full-length proteins, truncated proteins or proteolytically cleaved forms. The CRL2(KLHDC10) complex specifically recognizes proteins with a proline-glycine (Pro-Gly) or an alanine tail (CAT tail) at the C-terminus, leading to their ubiquitination and degradation. The CRL2(KLHDC10) complex is involved in the ribosome-associated quality control (RQC) pathway, which mediates the extraction of incompletely synthesized nascent chains from stalled ribosomes: CRL2(KLHDC10) acts downstream of NEMF and recognizes CAT tails associated with stalled nascent chains, leading to their ubiquitination and degradation. Participates in the oxidative stress-induced cell death through MAP3K5 activation. Inhibits PPP5C phosphatase activity on MAP3K5. Acts as a regulator of necroptosis. This Rattus norvegicus (Rat) protein is Kelch domain-containing protein 10.